The sequence spans 281 residues: Endonuclease III-like protein 1 (281 aa).

Residues 1–17 constitute a mitochondrion transit peptide; that stretch reads MCAAAPRGGGRAARRLG. The tract at residues 1 to 60 is disordered; it reads MCAAAPRGGGRAARRLGAATAGSRVPSAAPRYSRRTRRVPIAYEAEPKPESPGPKWEPEN. Low complexity predominate over residues 15-24; the sequence is RLGAATAGSR. The 25-residue stretch at 168–192 folds into the HhH domain; that stretch reads KYGGDIPGTVEELVKLPGVGPKMAH. Lysine 189 serves as the catalytic Nucleophile; for N-glycosylase activity. [4Fe-4S] cluster-binding residues include cysteine 259, cysteine 266, cysteine 269, and cysteine 275.

The protein belongs to the Nth/MutY family. The cofactor is [4Fe-4S] cluster.

It localises to the nucleus. The protein localises to the mitochondrion. It carries out the reaction 2'-deoxyribonucleotide-(2'-deoxyribose 5'-phosphate)-2'-deoxyribonucleotide-DNA = a 3'-end 2'-deoxyribonucleotide-(2,3-dehydro-2,3-deoxyribose 5'-phosphate)-DNA + a 5'-end 5'-phospho-2'-deoxyribonucleoside-DNA + H(+). Functionally, bifunctional DNA N-glycosylase with associated apurinic/apyrimidinic (AP) lyase function that catalyzes the first step in base excision repair (BER), the primary repair pathway for the repair of oxidative DNA damage. The DNA N-glycosylase activity releases the damaged DNA base from DNA by cleaving the N-glycosidic bond, leaving an AP site. The AP lyase activity cleaves the phosphodiester bond 3' to the AP site by a beta-elimination. Primarily recognizes and repairs oxidative base damage of pyrimidines. The sequence is that of Endonuclease III-like protein 1 from Gallus gallus (Chicken).